Reading from the N-terminus, the 469-residue chain is GTPase Der (469 aa).

EngA-type G domains follow at residues 30-193 (PVLA…PEVA) and 203-376 (RRVA…ASWD). Residues 36-43 (GRPNVGKS), 83-87 (DTGGW), 145-148 (NKVD), 209-216 (GKPNVGKS), 256-260 (DTAGL), and 321-324 (NKWD) each bind GTP. In terms of domain architecture, KH-like spans 377-459 (TRIPTGPLNS…PIRINVRVRE (83 aa)).

Belongs to the TRAFAC class TrmE-Era-EngA-EngB-Septin-like GTPase superfamily. EngA (Der) GTPase family. In terms of assembly, associates with the 50S ribosomal subunit.

GTPase that plays an essential role in the late steps of ribosome biogenesis. This Mycobacterium marinum (strain ATCC BAA-535 / M) protein is GTPase Der.